We begin with the raw amino-acid sequence, 275 residues long: Trypsin-4 (275 aa).

A signal peptide spans 1-18 (MSNKITILLAVLLAVVAC). Residues 19 to 48 (AQAHASHQRRVPYPLPRFLPRPHHTVSNHR) constitute a propeptide, activation peptide. Residues 49–274 (IVGGFEIDVA…VRDWIRETCG (226 aa)) enclose the Peptidase S1 domain. The cysteines at positions 74 and 90 are disulfide-linked. Catalysis depends on charge relay system residues H89 and D134. Cystine bridges form between C199-C215 and C226-C250. S230 (charge relay system) is an active-site residue.

This sequence belongs to the peptidase S1 family. In terms of tissue distribution, expressed in the midgut. Expression levels drop a few hours after blood feeding and pick up again 28 hours later.

The protein resides in the secreted. The enzyme catalyses Preferential cleavage: Arg-|-Xaa, Lys-|-Xaa.. In terms of biological role, constitutive trypsin that is expressed 2 days after emergence, coinciding with host seeking behavior of the female. This is Trypsin-4 (TRYP4) from Anopheles gambiae (African malaria mosquito).